We begin with the raw amino-acid sequence, 211 residues long: Large ribosomal subunit protein uL3 (211 aa).

Gln150 bears the N5-methylglutamine mark.

The protein belongs to the universal ribosomal protein uL3 family. As to quaternary structure, part of the 50S ribosomal subunit. Forms a cluster with proteins L14 and L19. Post-translationally, methylated by PrmB.

Functionally, one of the primary rRNA binding proteins, it binds directly near the 3'-end of the 23S rRNA, where it nucleates assembly of the 50S subunit. The chain is Large ribosomal subunit protein uL3 from Pseudomonas savastanoi pv. phaseolicola (strain 1448A / Race 6) (Pseudomonas syringae pv. phaseolicola (strain 1448A / Race 6)).